We begin with the raw amino-acid sequence, 157 residues long: SsrA-binding protein (157 aa).

This sequence belongs to the SmpB family.

The protein localises to the cytoplasm. In terms of biological role, required for rescue of stalled ribosomes mediated by trans-translation. Binds to transfer-messenger RNA (tmRNA), required for stable association of tmRNA with ribosomes. tmRNA and SmpB together mimic tRNA shape, replacing the anticodon stem-loop with SmpB. tmRNA is encoded by the ssrA gene; the 2 termini fold to resemble tRNA(Ala) and it encodes a 'tag peptide', a short internal open reading frame. During trans-translation Ala-aminoacylated tmRNA acts like a tRNA, entering the A-site of stalled ribosomes, displacing the stalled mRNA. The ribosome then switches to translate the ORF on the tmRNA; the nascent peptide is terminated with the 'tag peptide' encoded by the tmRNA and targeted for degradation. The ribosome is freed to recommence translation, which seems to be the essential function of trans-translation. The protein is SsrA-binding protein of Clostridium kluyveri (strain NBRC 12016).